Reading from the N-terminus, the 410-residue chain is Venom metalloproteinase 2 (410 aa).

Residues 1–22 form the signal peptide; the sequence is MDTFILTYSILFLALFIESIHS. N-linked (GlcNAc...) asparagine glycosylation is found at asparagine 64, asparagine 112, asparagine 187, asparagine 231, asparagine 292, and asparagine 307. Residues 214–410 form the Peptidase M12B domain; it reads FYPKLLVLVD…NNNVSKFIWS (197 aa). Histidine 365 is a binding site for Zn(2+). The active site involves glutamate 366. Zn(2+)-binding residues include histidine 369 and histidine 375. Residue asparagine 403 is glycosylated (N-linked (GlcNAc...) asparagine).

In the C-terminal section; belongs to the venom metalloproteinase (M12B) family. As to quaternary structure, monomer. Zn(2+) is required as a cofactor. In terms of tissue distribution, expressed by the venom gland.

Its subcellular location is the secreted. Its activity is regulated as follows. The gelatinase activity is inhibited by EDTA. Functionally, the recombinant protein has gelatinase activity. In vivo, injection of this recombinant into fifth instar L.oleracea (host) larvae results in partial insect mortality associated with the molt to sixth instar, with surviving insects showing retarded development and growth. This Eulophus pennicornis (Parasitoid wasp) protein is Venom metalloproteinase 2.